Here is a 367-residue protein sequence, read N- to C-terminus: Homoserine O-acetyltransferase (367 aa).

The AB hydrolase-1 domain occupies 44–350 (NVIMVEHAWT…AYGHDAFLLE (307 aa)). S150 (nucleophile) is an active-site residue. R217 serves as a coordination point for substrate. Active-site residues include D311 and H344. Residue D345 coordinates substrate.

Belongs to the AB hydrolase superfamily. MetX family. As to quaternary structure, homodimer.

It is found in the cytoplasm. The enzyme catalyses L-homoserine + acetyl-CoA = O-acetyl-L-homoserine + CoA. It functions in the pathway amino-acid biosynthesis; L-methionine biosynthesis via de novo pathway; O-acetyl-L-homoserine from L-homoserine: step 1/1. Functionally, transfers an acetyl group from acetyl-CoA to L-homoserine, forming acetyl-L-homoserine. In vitro, can also use propionyl-CoA or butiryl-CoA as acyl donor. This Trichlorobacter lovleyi (strain ATCC BAA-1151 / DSM 17278 / SZ) (Geobacter lovleyi) protein is Homoserine O-acetyltransferase.